A 263-amino-acid chain; its full sequence is Probable methylthioribulose-1-phosphate dehydratase (263 aa).

Cysteine 102 is a binding site for substrate. 2 residues coordinate Zn(2+): histidine 120 and histidine 122. Residue glutamate 144 is the Proton donor/acceptor of the active site. Histidine 200 provides a ligand contact to Zn(2+).

The protein belongs to the aldolase class II family. MtnB subfamily. Zn(2+) is required as a cofactor.

Its subcellular location is the cytoplasm. It catalyses the reaction 5-(methylsulfanyl)-D-ribulose 1-phosphate = 5-methylsulfanyl-2,3-dioxopentyl phosphate + H2O. It participates in amino-acid biosynthesis; L-methionine biosynthesis via salvage pathway; L-methionine from S-methyl-5-thio-alpha-D-ribose 1-phosphate: step 2/6. Catalyzes the dehydration of methylthioribulose-1-phosphate (MTRu-1-P) into 2,3-diketo-5-methylthiopentyl-1-phosphate (DK-MTP-1-P). The polypeptide is Probable methylthioribulose-1-phosphate dehydratase (Caenorhabditis elegans).